A 228-amino-acid chain; its full sequence is Lipoprotein LpqN (228 aa).

The signal sequence occupies residues 1–19 (MKHFTAAVATVALSLALAG). A lipid anchor (N-palmitoyl cysteine) is attached at Cys-20. Cys-20 is lipidated: S-diacylglycerol cysteine. Positions 26–53 (TDSAPTTSPTTTSPTTSTTTTSATTSAQ) are disordered. The span at 28 to 52 (SAPTTSPTTTSPTTSTTTTSATTSA) shows a compositional bias: low complexity.

Interacts with the periplasmic loop domains of the mycolate transporters MmpL3 and MmpL11. Also interacts with secreted cell envelope biosynthetic enzymes such as Ag85A. These interactions are weak and may require a putative mycobacterial adapter protein or molecule. Interacts with human ubiquitin ligase CBL.

The protein resides in the cell membrane. Its subcellular location is the secreted. Functionally, involved in cell envelope biogenesis. May act as a membrane fusion protein, connecting MmpL transporters with periplasmic proteins, and play a role in cell envelope lipid changes during biofilm maturation. Is also a virulence factor required for intracellular survival. Associates with CBL, a host ubiquitin ligase, and probably blocks the normal functions of CBL and disturbs CBL-mediated antibacterial activity. Interaction counteracts antibacterial defense but causes a reciprocal enhancement of antiviral defense. The sequence is that of Lipoprotein LpqN from Mycobacterium tuberculosis (strain ATCC 25618 / H37Rv).